A 135-amino-acid polypeptide reads, in one-letter code: Flagellar assembly factor FliW 2 (135 aa).

Belongs to the FliW family. In terms of assembly, interacts with translational regulator CsrA and flagellin(s).

The protein resides in the cytoplasm. Its function is as follows. Acts as an anti-CsrA protein, binds CsrA and prevents it from repressing translation of its target genes, one of which is flagellin. Binds to flagellin and participates in the assembly of the flagellum. This is Flagellar assembly factor FliW 2 from Helicobacter acinonychis (strain Sheeba).